Reading from the N-terminus, the 348-residue chain is Phosphoribosylformylglycinamidine cyclo-ligase (348 aa).

It belongs to the AIR synthase family.

Its subcellular location is the cytoplasm. It carries out the reaction 2-formamido-N(1)-(5-O-phospho-beta-D-ribosyl)acetamidine + ATP = 5-amino-1-(5-phospho-beta-D-ribosyl)imidazole + ADP + phosphate + H(+). It participates in purine metabolism; IMP biosynthesis via de novo pathway; 5-amino-1-(5-phospho-D-ribosyl)imidazole from N(2)-formyl-N(1)-(5-phospho-D-ribosyl)glycinamide: step 2/2. This is Phosphoribosylformylglycinamidine cyclo-ligase from Geotalea daltonii (strain DSM 22248 / JCM 15807 / FRC-32) (Geobacter daltonii).